Here is a 169-residue protein sequence, read N- to C-terminus: Lachrymatory-factor synthase (169 aa).

Positions 1–12 are excised as a propeptide; that stretch reads MELNPGAPAVVA. Catalysis depends on proton donor/acceptor residues Glu88 and Tyr102.

Its subcellular location is the vacuole. It catalyses the reaction (E)-prop-1-en-1-SO-peroxol = (Z)-propanethial S-oxide. It carries out the reaction (E)-alk-1-en-1-SO-peroxol = (Z)-alkanethial oxide. Functionally, produces lacrymatory factor (propanthial S-oxide) from 1-propenylsulphenic acid, an unstable compound resulting from the degradation of trans-1-propenyl-L-cysteine sulphoxide (PRENCSO) by alliinase. The sequence is that of Lachrymatory-factor synthase from Allium cepa (Onion).